A 138-amino-acid polypeptide reads, in one-letter code: Large ribosomal subunit protein uL16 (138 aa).

Basic residues predominate over residues 1-13 (MLQPARRKYRKEQ). Residues 1–22 (MLQPARRKYRKEQKGRNTGIAT) form a disordered region.

Belongs to the universal ribosomal protein uL16 family. Part of the 50S ribosomal subunit.

Functionally, binds 23S rRNA and is also seen to make contacts with the A and possibly P site tRNAs. The chain is Large ribosomal subunit protein uL16 from Delftia acidovorans (strain DSM 14801 / SPH-1).